A 170-amino-acid chain; its full sequence is Extracellular globin-3 (170 aa).

The signal sequence occupies residues M1–A17. The region spanning C23–N169 is the Globin domain. A disulfide bond links C24 and C156. H119 is a binding site for heme b.

This sequence belongs to the globin family. As to quaternary structure, the extracellular hemoglobin of the earthworm consists of 12 subunits that have a hexagonal bilayer structure with a molecular weight near 3.8 million. Each one-twelfth subunit is composed primarily of disulfide linked trimers (chains A, B, and C) and monomers (chain D).

The protein localises to the secreted. The polypeptide is Extracellular globin-3 (Lumbricus terrestris (Common earthworm)).